Here is a 52-residue protein sequence, read N- to C-terminus: UPF0391 membrane protein XCV0245 (52 aa).

2 helical membrane passes run 5–25 and 27–47; these read AIIFFVIAIIAAVLGFSGIAG and ATNIAWILFVVFLILAVISMF.

Belongs to the UPF0391 family.

It is found in the cell membrane. The sequence is that of UPF0391 membrane protein XCV0245 from Xanthomonas euvesicatoria pv. vesicatoria (strain 85-10) (Xanthomonas campestris pv. vesicatoria).